Consider the following 363-residue polypeptide: uncharacterized protein (363 aa).

An N-terminal signal peptide occupies residues 1-20; it reads MKRAPLITGLLLISTSCAYA.

It belongs to the fimbrial protein family.

The protein localises to the fimbrium. Part of the yraHIJK fimbrial operon. Could contribute to adhesion to various surfaces in specific environmental niches. Increases adhesion to eukaryotic T24 bladder epithelial cells in the absence of fim operon. This is an uncharacterized protein from Escherichia coli (strain K12).